A 446-amino-acid chain; its full sequence is 3-phosphoshikimate 1-carboxyvinyltransferase (446 aa).

3-phosphoshikimate contacts are provided by lysine 21, serine 22, and arginine 26. Position 21 (lysine 21) interacts with phosphoenolpyruvate. Glycine 94 and arginine 122 together coordinate phosphoenolpyruvate. 3-phosphoshikimate contacts are provided by serine 167, glutamine 169, aspartate 315, and lysine 342. Position 169 (glutamine 169) interacts with phosphoenolpyruvate. The active-site Proton acceptor is the aspartate 315. Phosphoenolpyruvate contacts are provided by arginine 346 and arginine 388.

It belongs to the EPSP synthase family. As to quaternary structure, monomer.

It is found in the cytoplasm. It carries out the reaction 3-phosphoshikimate + phosphoenolpyruvate = 5-O-(1-carboxyvinyl)-3-phosphoshikimate + phosphate. The protein operates within metabolic intermediate biosynthesis; chorismate biosynthesis; chorismate from D-erythrose 4-phosphate and phosphoenolpyruvate: step 6/7. In terms of biological role, catalyzes the transfer of the enolpyruvyl moiety of phosphoenolpyruvate (PEP) to the 5-hydroxyl of shikimate-3-phosphate (S3P) to produce enolpyruvyl shikimate-3-phosphate and inorganic phosphate. The polypeptide is 3-phosphoshikimate 1-carboxyvinyltransferase (Alkalilimnicola ehrlichii (strain ATCC BAA-1101 / DSM 17681 / MLHE-1)).